Reading from the N-terminus, the 198-residue chain is Na(+)-translocating NADH-quinone reductase subunit E (198 aa).

The next 6 helical transmembrane spans lie at 11–31 (SVFI…FLAV), 35–55 (VSTA…SVPV), 77–97 (FLNF…LEMI), 110–130 (GIFL…SFMV), 140–160 (IVYG…LAGI), and 176–196 (LGIT…FSGV).

This sequence belongs to the NqrDE/RnfAE family. In terms of assembly, composed of six subunits; NqrA, NqrB, NqrC, NqrD, NqrE and NqrF.

It is found in the cell inner membrane. It carries out the reaction a ubiquinone + n Na(+)(in) + NADH + H(+) = a ubiquinol + n Na(+)(out) + NAD(+). Functionally, NQR complex catalyzes the reduction of ubiquinone-1 to ubiquinol by two successive reactions, coupled with the transport of Na(+) ions from the cytoplasm to the periplasm. NqrA to NqrE are probably involved in the second step, the conversion of ubisemiquinone to ubiquinol. This is Na(+)-translocating NADH-quinone reductase subunit E from Histophilus somni (strain 2336) (Haemophilus somnus).